A 428-amino-acid polypeptide reads, in one-letter code: Light-independent protochlorophyllide reductase subunit N (428 aa).

[4Fe-4S] cluster is bound by residues cysteine 29, cysteine 54, and cysteine 115.

It belongs to the BchN/ChlN family. Protochlorophyllide reductase is composed of three subunits; BchL, BchN and BchB. Forms a heterotetramer of two BchB and two BchN subunits. The cofactor is [4Fe-4S] cluster.

The enzyme catalyses chlorophyllide a + oxidized 2[4Fe-4S]-[ferredoxin] + 2 ADP + 2 phosphate = protochlorophyllide a + reduced 2[4Fe-4S]-[ferredoxin] + 2 ATP + 2 H2O. It participates in porphyrin-containing compound metabolism; bacteriochlorophyll biosynthesis (light-independent). Functionally, component of the dark-operative protochlorophyllide reductase (DPOR) that uses Mg-ATP and reduced ferredoxin to reduce ring D of protochlorophyllide (Pchlide) to form chlorophyllide a (Chlide). This reaction is light-independent. The NB-protein (BchN-BchB) is the catalytic component of the complex. The polypeptide is Light-independent protochlorophyllide reductase subunit N (Cereibacter sphaeroides (strain ATCC 17023 / DSM 158 / JCM 6121 / CCUG 31486 / LMG 2827 / NBRC 12203 / NCIMB 8253 / ATH 2.4.1.) (Rhodobacter sphaeroides)).